A 325-amino-acid chain; its full sequence is Psp operon transcriptional activator (325 aa).

The Sigma-54 factor interaction domain occupies 15-237; it reads FLEVLEQVSH…ELKNVVERSV (223 aa). Residues 36–43 and 99–108 each bind ATP; these read GERGTGKE and ADGGTLFLDE. Positions 302–321 form a DNA-binding region, H-T-H motif; it reads QKRAAELLGLTYHQFRALLK.

In terms of assembly, forms a complex with PspA, which is composed of around 6 PspF subunits and 6 PspA subunits.

The protein localises to the cytoplasm. ATPase activity is inhibited by interaction with PspA. Under inducing conditions, the interaction is disrupted, allowing activation of psp transcription. Functionally, transcriptional activator for the phage shock protein (psp) operon (pspABCDE) and pspG gene. The protein is Psp operon transcriptional activator (pspF) of Escherichia coli (strain K12).